Reading from the N-terminus, the 98-residue chain is C-X-C motif chemokine 10 (98 aa).

An N-terminal signal peptide occupies residues 1–21; sequence MNQSAVLIFCLIFLTLNGTQG. The residue at position 26 (Arg26) is a Citrulline. 2 cysteine pairs are disulfide-bonded: Cys30-Cys57 and Cys32-Cys74.

The protein belongs to the intercrine alpha (chemokine CxC) family. Monomer, dimer, and tetramer. Interacts with CXCR3 (via N-terminus).

Its subcellular location is the secreted. Its function is as follows. Pro-inflammatory cytokine that is involved in a wide variety of processes such as chemotaxis, differentiation, and activation of peripheral immune cells, regulation of cell growth, apoptosis and modulation of angiostatic effects. Plays thereby an important role during viral infections by stimulating the activation and migration of immune cells to the infected sites. Mechanistically, binding of CXCL10 to the CXCR3 receptor activates G protein-mediated signaling and results in downstream activation of phospholipase C-dependent pathway, an increase in intracellular calcium production and actin reorganization. In turn, recruitment of activated Th1 lymphocytes occurs at sites of inflammation. Activation of the CXCL10/CXCR3 axis also plays an important role in neurons in response to brain injury for activating microglia, the resident macrophage population of the central nervous system, and directing them to the lesion site. This recruitment is an essential element for neuronal reorganization. This is C-X-C motif chemokine 10 (CXCL10) from Canis lupus familiaris (Dog).